A 548-amino-acid polypeptide reads, in one-letter code: 5-epi-aristolochene synthase (548 aa).

Positions 264, 301, 305, 441, and 444 each coordinate (2E,6E)-farnesyl diphosphate. The Mg(2+) site is built by Asp-301 and Asp-305. The DDXXD motif signature appears at 301 to 305 (DDTFD). Mg(2+) is bound by residues Asp-444, Asp-445, Thr-448, and Glu-452.

It belongs to the terpene synthase family. In terms of assembly, monomer. Mg(2+) serves as cofactor. In terms of processing, self-alkylated at Tyr-520 in the presence of (2Z,6E)-farnesyl diphosphate ((Z,E)-FPP). Self-alkylated at Asp-444 at warm temperature (42 degrees Celsius) in the presence of (2E,6E)-farnesyl diphosphate ((E,E)-FPP).

Its subcellular location is the cytoplasm. The enzyme catalyses (2E,6E)-farnesyl diphosphate = (+)-5-epi-aristolochene + diphosphate. It catalyses the reaction (2Z,6E)-farnesyl diphosphate = (+)-2-epi-prezizaene + diphosphate. The catalysed reaction is (2Z,6E)-farnesyl diphosphate = (-)-alpha-cedrene + diphosphate. It carries out the reaction (2Z,6E)-farnesyl diphosphate = (-)-beta-curcumene + diphosphate. Its pathway is secondary metabolite biosynthesis; terpenoid biosynthesis. Its activity is regulated as follows. Inhibited activity toward farnesyl diphosphate (FPP) by anilinogeranyl diphosphate (AGPP); AGPP undergoes a cyclization event leading to the formation of a novel macrocyclic paracyclophane alkaloid. Repressed by sesquilavandulyl diphosphate (SPP) via the induction of self-alkyation. Catalyzes the cyclization of trans,trans-farnesyl diphosphate (FPP) to the bicyclic intermediate 5-epi-aristolochene, initial step in the conversion of FPP to the sesquiterpenoid antifungal phytoalexin capsidiol. Produces germacrene A as an enzyme-bound intermediate that is not released by the enzyme, but is further cyclized to produce the bicyclic 5-epi-aristolochene. Mediates, at low levels, the formation of 4-epi-eremophilene and premnaspirodiene from trans,trans-farnesyl diphosphate. Also mediates the conversion of cis,trans-farnesyl diphosphate to cisoid minor products such as (+)-2-epi-prezizaene, (-)-alpha-cedrene and, to a lesser extent, (-)-beta-curcumene; also produces, at low levels, alpha-acoradiene and 4-epi-alpha-acoradiene, but barely nerolidol, alpha-bisabolol, epi-alpha-bisabolol and cis-farnesol. The sequence is that of 5-epi-aristolochene synthase (EAS3) from Nicotiana tabacum (Common tobacco).